The primary structure comprises 166 residues: uncharacterized protein (166 aa).

The may interact with smn1 stretch occupies residues 1-58 (MSSEITEGDLQKFHDEHFNAKAVNLWNVAFAQNDRGGNSESANVEYTQSVERYPDGTI).

As to quaternary structure, part of the core SMN complex at least composed of smn1, yip11/gem2, gem6, gem7 and gem8. Interacts with smn1; the interaction is direct. Interacts with gem7; the interaction is direct.

It localises to the cytoplasm. Its subcellular location is the nucleus. Its function is as follows. The SMN complex catalyzes the assembly of small nuclear ribonucleoproteins (snRNPs), the building blocks of the spliceosome, and thereby plays an important role in the splicing of cellular pre-mRNAs. Most spliceosomal snRNPs contain a common set of Sm proteins SNRPB, SNRPD1, SNRPD2, SNRPD3, SNRPE, SNRPF and SNRPG that assemble in a heptameric protein ring on the Sm site of the small nuclear RNA to form the core snRNP (Sm core). In the cytosol, the Sm proteins SNRPD1, SNRPD2, SNRPE, SNRPF and SNRPG are trapped in an inactive 6S pICln-Sm complex by the chaperone CLNS1A that controls the assembly of the core snRNP. To assemble core snRNPs, the SMN complex accepts the trapped 5Sm proteins from CLNS1A forming an intermediate. Binding of snRNA inside 5Sm triggers eviction of the SMN complex, thereby allowing binding of SNRPD3 and SNRPB to complete assembly of the core snRNP. This is an uncharacterized protein from Schizosaccharomyces pombe (strain 972 / ATCC 24843) (Fission yeast).